The following is a 179-amino-acid chain: Probable inosine/xanthosine triphosphatase (179 aa).

Position 13 to 18 (13 to 18 (STNPVK)) interacts with substrate. Gln70 lines the Mg(2+) pocket.

It belongs to the YjjX NTPase family. As to quaternary structure, homodimer. Requires Mg(2+) as cofactor. Mn(2+) serves as cofactor.

It catalyses the reaction XTP + H2O = XDP + phosphate + H(+). The enzyme catalyses ITP + H2O = IDP + phosphate + H(+). Its function is as follows. Phosphatase that hydrolyzes non-canonical purine nucleotides such as XTP and ITP to their respective diphosphate derivatives. Probably excludes non-canonical purines from DNA/RNA precursor pool, thus preventing their incorporation into DNA/RNA and avoiding chromosomal lesions. This Methanocaldococcus jannaschii (strain ATCC 43067 / DSM 2661 / JAL-1 / JCM 10045 / NBRC 100440) (Methanococcus jannaschii) protein is Probable inosine/xanthosine triphosphatase.